Consider the following 292-residue polypeptide: Phosphatidylserine decarboxylase proenzyme (292 aa).

Residues Asp89, His146, and Ser252 each act as charge relay system; for autoendoproteolytic cleavage activity in the active site. The active-site Schiff-base intermediate with substrate; via pyruvic acid; for decarboxylase activity is Ser252. At Ser252 the chain carries Pyruvic acid (Ser); by autocatalysis.

The protein belongs to the phosphatidylserine decarboxylase family. PSD-B subfamily. Prokaryotic type I sub-subfamily. In terms of assembly, heterodimer of a large membrane-associated beta subunit and a small pyruvoyl-containing alpha subunit. Pyruvate serves as cofactor. In terms of processing, is synthesized initially as an inactive proenzyme. Formation of the active enzyme involves a self-maturation process in which the active site pyruvoyl group is generated from an internal serine residue via an autocatalytic post-translational modification. Two non-identical subunits are generated from the proenzyme in this reaction, and the pyruvate is formed at the N-terminus of the alpha chain, which is derived from the carboxyl end of the proenzyme. The autoendoproteolytic cleavage occurs by a canonical serine protease mechanism, in which the side chain hydroxyl group of the serine supplies its oxygen atom to form the C-terminus of the beta chain, while the remainder of the serine residue undergoes an oxidative deamination to produce ammonia and the pyruvoyl prosthetic group on the alpha chain. During this reaction, the Ser that is part of the protease active site of the proenzyme becomes the pyruvoyl prosthetic group, which constitutes an essential element of the active site of the mature decarboxylase.

Its subcellular location is the cell membrane. The enzyme catalyses a 1,2-diacyl-sn-glycero-3-phospho-L-serine + H(+) = a 1,2-diacyl-sn-glycero-3-phosphoethanolamine + CO2. The protein operates within phospholipid metabolism; phosphatidylethanolamine biosynthesis; phosphatidylethanolamine from CDP-diacylglycerol: step 2/2. In terms of biological role, catalyzes the formation of phosphatidylethanolamine (PtdEtn) from phosphatidylserine (PtdSer). The protein is Phosphatidylserine decarboxylase proenzyme of Shewanella baltica (strain OS223).